The sequence spans 130 residues: Small ribosomal subunit protein uS9 (130 aa).

Positions 109-130 are disordered; sequence RVKERKKYGQKGARAKFQFSKR.

This sequence belongs to the universal ribosomal protein uS9 family.

This is Small ribosomal subunit protein uS9 from Desulfotalea psychrophila (strain LSv54 / DSM 12343).